The following is a 444-amino-acid chain: MNKMIPRVRFAPSPTGFLHVGGARTALFNWLYARHFKGTFILRIEDTDQSRNTPQALSVIFDNLSWLGLDWDEGPLPDGSSKGQFGPYFQSQRKEIYNEYCNRLIAKELAYIKDEAVYFRMPRKRIIVSDLICGDIYFDCSLEKDFVIRRKDGSFVFHLVNVVDDLEMQISHVIRGEDHLSNTPKHIALFEALGMSPPLYAHIPLILNPSGTKMSKRDKGSSVQEYIDEGFLPQAFRNYLCLLGWSLKENREIFGIEEAIAKFDLPQIHRSNARFNHQKLLWINGEYMRSLPLDELYPHAFFWLKKAGLIDQNTDCSFLKQAVGIVREKVKTGKELVEWMKPLLSDTLQYDEAVVQQYLDDKGKEILREALPYLEEVSSFQAKELEAIIKNLSLKMGRKTADYIHRLRVALTGRTVGPSLYPMLEVLGKQKVLNRLYKVVGPKE.

Positions 12-22 match the 'HIGH' region motif; the sequence is PSPTGFLHVGG. The 'KMSKS' region signature appears at 213 to 217; that stretch reads KMSKR. Lys216 is an ATP binding site.

Belongs to the class-I aminoacyl-tRNA synthetase family. Glutamate--tRNA ligase type 1 subfamily. In terms of assembly, monomer.

It localises to the cytoplasm. It carries out the reaction tRNA(Glu) + L-glutamate + ATP = L-glutamyl-tRNA(Glu) + AMP + diphosphate. Functionally, catalyzes the attachment of glutamate to tRNA(Glu) in a two-step reaction: glutamate is first activated by ATP to form Glu-AMP and then transferred to the acceptor end of tRNA(Glu). This is Glutamate--tRNA ligase from Methylacidiphilum infernorum (isolate V4) (Methylokorus infernorum (strain V4)).